The primary structure comprises 232 residues: tRNA1(Val) (adenine(37)-N6)-methyltransferase (232 aa).

This sequence belongs to the methyltransferase superfamily. tRNA (adenine-N(6)-)-methyltransferase family.

The protein resides in the cytoplasm. The catalysed reaction is adenosine(37) in tRNA1(Val) + S-adenosyl-L-methionine = N(6)-methyladenosine(37) in tRNA1(Val) + S-adenosyl-L-homocysteine + H(+). Functionally, specifically methylates the adenine in position 37 of tRNA(1)(Val) (anticodon cmo5UAC). The sequence is that of tRNA1(Val) (adenine(37)-N6)-methyltransferase from Haemophilus influenzae (strain PittGG).